Here is a 379-residue protein sequence, read N- to C-terminus: MGSADRPALRSPSLPPPPPSPPSPLLLLLPLLPLWLGLMGPGAAADGSEPATGEGRGGARSVRVDVKLPRQDALVLEGVRIGPEDGPEPLLGGRLLLMDVVDAEQEIPVDGWIAVAYVGKEQVAQFHQENQGSSQKAYPKALVQQMRRALFLGASALLLLILNHSVVRELDVSQLLLRPVIVLHYSSNVTKLLEALLQRTQATAEISSGESLSANIEWKLTLWTTCGLSKDGYGGWQDLVCLGGAQAQEQKPLQQLWNAILLVAMLLCTGLVVQAQRQASRQNQQEPGGQEDLFKRRVVRRLASLKTRRCRLSRAAHSLPEPGTETCAVCLDYFCNKQWLRVLPCKHEFHRDCVDPWLMLQQTCPLCKFNVLGNHYSDD.

Disordered stretches follow at residues 1 to 21 (MGSA…PPSP) and 44 to 63 (AADG…RSVR). Residues 1–24 (MGSADRPALRSPSLPPPPPSPPSP) are Cytoplasmic-facing. Residues 25–45 (LLLLLPLLPLWLGLMGPGAAA) form a helical membrane-spanning segment. At 46–252 (DGSEPATGEG…GGAQAQEQKP (207 aa)) the chain is on the extracellular side. The N-linked (GlcNAc...) asparagine glycan is linked to Asn-188. The chain crosses the membrane as a helical span at residues 253 to 273 (LQQLWNAILLVAMLLCTGLVV). The Cytoplasmic portion of the chain corresponds to 274–379 (QAQRQASRQN…NVLGNHYSDD (106 aa)). Residues 327-368 (CAVCLDYFCNKQWLRVLPCKHEFHRDCVDPWLMLQQTCPLCK) form an RING-type; atypical zinc finger.

The protein localises to the membrane. This chain is RING finger protein 215 (Rnf215), found in Mus musculus (Mouse).